Reading from the N-terminus, the 1049-residue chain is Probable disease resistance protein RF9 (1049 aa).

The stretch at 25–41 forms a coiled coil; the sequence is QGVEDQVTELKRDLNLL. The segment at 139–158 is disordered; it reads GYKQPQGDKQREMRPRFSKD. A compositionally biased stretch (basic and acidic residues) spans 144–158; the sequence is QGDKQREMRPRFSKD. In terms of domain architecture, NB-ARC spans 147–460; sequence KQREMRPRFS…AEGIFQPRHY (314 aa). An ATP-binding site is contributed by 190-197; the sequence is GMGGLGKT. 10 LRR repeats span residues 584 to 608, 609 to 634, 657 to 682, 683 to 707, 776 to 799, 800 to 827, 849 to 873, 896 to 923, 945 to 968, and 990 to 1015; these read LELL…SIGQ, LIHL…NLKL, MQQL…NLVK, LETL…RLRT, PSHL…ILEK, LHQL…GFPQ, MPVL…HLPS, LVHL…GFPQ, MPQL…GFPQ, and MPLL…RFIY.

Belongs to the disease resistance NB-LRR family.

Functionally, potential disease resistance protein. This chain is Probable disease resistance protein RF9 (RF9), found in Arabidopsis thaliana (Mouse-ear cress).